The primary structure comprises 118 residues: Large ribosomal subunit protein uL22 (118 aa).

This sequence belongs to the universal ribosomal protein uL22 family. As to quaternary structure, part of the 50S ribosomal subunit.

Its function is as follows. This protein binds specifically to 23S rRNA; its binding is stimulated by other ribosomal proteins, e.g. L4, L17, and L20. It is important during the early stages of 50S assembly. It makes multiple contacts with different domains of the 23S rRNA in the assembled 50S subunit and ribosome. The globular domain of the protein is located near the polypeptide exit tunnel on the outside of the subunit, while an extended beta-hairpin is found that lines the wall of the exit tunnel in the center of the 70S ribosome. The chain is Large ribosomal subunit protein uL22 from Leuconostoc citreum (strain KM20).